Reading from the N-terminus, the 630-residue chain is 1,4-alpha-glucan branching enzyme GlgB (630 aa).

D311 acts as the Nucleophile in catalysis. The Proton donor role is filled by E362.

It belongs to the glycosyl hydrolase 13 family. GlgB subfamily. In terms of assembly, monomer.

The enzyme catalyses Transfers a segment of a (1-&gt;4)-alpha-D-glucan chain to a primary hydroxy group in a similar glucan chain.. The protein operates within glycan biosynthesis; glycogen biosynthesis. Its function is as follows. Catalyzes the formation of the alpha-1,6-glucosidic linkages in glycogen by scission of a 1,4-alpha-linked oligosaccharide from growing alpha-1,4-glucan chains and the subsequent attachment of the oligosaccharide to the alpha-1,6 position. This chain is 1,4-alpha-glucan branching enzyme GlgB, found in Aquifex aeolicus (strain VF5).